The sequence spans 392 residues: Methylthioribose-1-phosphate isomerase (392 aa).

Asp-267 (proton donor) is an active-site residue.

Belongs to the eIF-2B alpha/beta/delta subunits family. MtnA subfamily.

The protein resides in the cytoplasm. It localises to the nucleus. It catalyses the reaction 5-(methylsulfanyl)-alpha-D-ribose 1-phosphate = 5-(methylsulfanyl)-D-ribulose 1-phosphate. Its pathway is amino-acid biosynthesis; L-methionine biosynthesis via salvage pathway; L-methionine from S-methyl-5-thio-alpha-D-ribose 1-phosphate: step 1/6. Catalyzes the interconversion of methylthioribose-1-phosphate (MTR-1-P) into methylthioribulose-1-phosphate (MTRu-1-P). The polypeptide is Methylthioribose-1-phosphate isomerase (Ajellomyces dermatitidis (strain ER-3 / ATCC MYA-2586) (Blastomyces dermatitidis)).